Here is a 787-residue protein sequence, read N- to C-terminus: Penicillin-binding protein 1A (787 aa).

At 1 to 6 (MYKSLF) the chain is on the cytoplasmic side. A helical; Signal-anchor for type II membrane protein membrane pass occupies residues 7–27 (LCLKIFAVLILIGCSVTAYII). Residues 28-787 (YHYSHDLPDY…GMLDQSQEIY (760 aa)) lie on the Periplasmic side of the membrane. The transglycosylase stretch occupies residues 49–220 (TRIYSRDGKL…SELNPDKNYS (172 aa)). Glu87 functions as the Proton donor; for transglycosylase activity in the catalytic mechanism. The transpeptidase stretch occupies residues 398–711 (DVIVVEPIKD…SNVVLPIFID (314 aa)). The active-site Acyl-ester intermediate; for transpeptidase activity is the Ser457.

This sequence in the N-terminal section; belongs to the glycosyltransferase 51 family. It in the C-terminal section; belongs to the transpeptidase family.

Its subcellular location is the cell inner membrane. It catalyses the reaction [GlcNAc-(1-&gt;4)-Mur2Ac(oyl-L-Ala-gamma-D-Glu-L-Lys-D-Ala-D-Ala)](n)-di-trans,octa-cis-undecaprenyl diphosphate + beta-D-GlcNAc-(1-&gt;4)-Mur2Ac(oyl-L-Ala-gamma-D-Glu-L-Lys-D-Ala-D-Ala)-di-trans,octa-cis-undecaprenyl diphosphate = [GlcNAc-(1-&gt;4)-Mur2Ac(oyl-L-Ala-gamma-D-Glu-L-Lys-D-Ala-D-Ala)](n+1)-di-trans,octa-cis-undecaprenyl diphosphate + di-trans,octa-cis-undecaprenyl diphosphate + H(+). The catalysed reaction is Preferential cleavage: (Ac)2-L-Lys-D-Ala-|-D-Ala. Also transpeptidation of peptidyl-alanyl moieties that are N-acyl substituents of D-alanine.. It participates in cell wall biogenesis; peptidoglycan biosynthesis. In terms of biological role, cell wall formation. Synthesis of cross-linked peptidoglycan from the lipid intermediates. The enzyme has a penicillin-insensitive transglycosylase N-terminal domain (formation of linear glycan strands) and a penicillin-sensitive transpeptidase C-terminal domain (cross-linking of the peptide subunits). The protein is Penicillin-binding protein 1A (mrcA) of Rickettsia prowazekii (strain Madrid E).